A 438-amino-acid polypeptide reads, in one-letter code: Histidinol dehydrogenase (438 aa).

Positions 129, 193, and 216 each coordinate NAD(+). The substrate site is built by T239, Q261, and H264. Q261 and H264 together coordinate Zn(2+). Active-site proton acceptor residues include E330 and H331. Substrate contacts are provided by H331, D364, E418, and H423. Position 364 (D364) interacts with Zn(2+). H423 is a Zn(2+) binding site.

Belongs to the histidinol dehydrogenase family. The cofactor is Zn(2+).

It carries out the reaction L-histidinol + 2 NAD(+) + H2O = L-histidine + 2 NADH + 3 H(+). It functions in the pathway amino-acid biosynthesis; L-histidine biosynthesis; L-histidine from 5-phospho-alpha-D-ribose 1-diphosphate: step 9/9. In terms of biological role, catalyzes the sequential NAD-dependent oxidations of L-histidinol to L-histidinaldehyde and then to L-histidine. The polypeptide is Histidinol dehydrogenase (Thermobifida fusca (strain YX)).